The following is a 205-amino-acid chain: Proteasome subunit beta type-3 (205 aa).

Belongs to the peptidase T1B family. In terms of assembly, the 26S proteasome consists of a 20S proteasome core and two 19S regulatory subunits. The 20S proteasome core is composed of 28 subunits that are arranged in four stacked rings, resulting in a barrel-shaped structure. The two end rings are each formed by seven alpha subunits, and the two central rings are each formed by seven beta subunits. The catalytic chamber with the active sites is on the inside of the barrel.

The protein resides in the cytoplasm. The protein localises to the nucleus. Functionally, non-catalytic component of the proteasome, a multicatalytic proteinase complex which is characterized by its ability to cleave peptides with Arg, Phe, Tyr, Leu, and Glu adjacent to the leaving group at neutral or slightly basic pH. The proteasome has an ATP-dependent proteolytic activity. This Drosophila melanogaster (Fruit fly) protein is Proteasome subunit beta type-3.